Consider the following 134-residue polypeptide: Small ribosomal subunit protein uS11 (134 aa).

Belongs to the universal ribosomal protein uS11 family. As to quaternary structure, part of the 30S ribosomal subunit. Interacts with proteins S7 and S18. Binds to IF-3.

Located on the platform of the 30S subunit, it bridges several disparate RNA helices of the 16S rRNA. Forms part of the Shine-Dalgarno cleft in the 70S ribosome. The polypeptide is Small ribosomal subunit protein uS11 (Corynebacterium glutamicum (strain R)).